The sequence spans 516 residues: Histone H4 transcription factor (516 aa).

3 C2H2-type zinc fingers span residues 15–39 (LQCE…VTQH), 127–151 (FLCL…VEAH), and 167–191 (VLCG…LRSH). The C2H2-type 4; degenerate zinc-finger motif lies at 197–219 (VACPTCGGMFANNTKFLDHIRRQ). 5 C2H2-type zinc fingers span residues 227-249 (FQCS…MRNH), 253-276 (YKCP…RFRH), 282-304 (FKCD…LDTH), 310-335 (YSCD…RKVH), and 343-366 (YRCH…RKKH). Residues 371–516 (PSGHPRFRYK…AAEEPEVQMV (146 aa)) are interaction with NPAT. The interval 372–405 (SGHPRFRYKEHEDGYMRLQLVRYESVELTQQLLR) is required for activation of histone H4 transcription and contributes to DNA-binding. 2 disordered regions span residues 429 to 456 (TVPG…PASQ) and 486 to 516 (PGEP…VQMV). The segment covering 436 to 445 (PQEEAEEEGG) has biased composition (acidic residues).

As to quaternary structure, binds MBD2 and a histone deacetylase complex. Interacts with NPAT. Post-translationally, ubiquitinated. Ubiquitination may lead to proteasome-mediated degradation.

It localises to the nucleus. Functionally, transcriptional repressor that binds to the consensus sequence 5'-CGGACGTT-3' and to the RB1 promoter. Transcriptional activator that promotes histone H4 gene transcription at the G1/S phase transition in conjunction with NPAT. Also activates transcription of the ATM and PRKDC genes. Autoregulates its expression by associating with its own promoter. The sequence is that of Histone H4 transcription factor (HINFP) from Bos taurus (Bovine).